An 824-amino-acid polypeptide reads, in one-letter code: Type IV secretion system protein PtlC homolog (824 aa).

456–463 (GQSGSGKT) serves as a coordination point for ATP.

The protein belongs to the TrbE/VirB4 family.

Its subcellular location is the cell membrane. The polypeptide is Type IV secretion system protein PtlC homolog (ptlC) (Bordetella bronchiseptica (strain ATCC BAA-588 / NCTC 13252 / RB50) (Alcaligenes bronchisepticus)).